Here is a 220-residue protein sequence, read N- to C-terminus: MSIPLEQPENVVVLRQTMYLLSLMTILRDQQTGHSEFVRTANLIINMLMQEALSALPYKKCLIKTSSGGTYTGVQPARDICGVSILRAGESMEYGLAAACNYSVPVGKLLVQRDETTFEAKLMFCKLPKDAQDRLVLLLDPLLATGNSVILAIQTLINKGIPEENIVFVNLIACNEGITNVFAKFPKLRMVTASIDPELNANKYVVPGCGDFGDRYFGTC.

77–80 serves as a coordination point for GTP; it reads ARDI. 2 residues coordinate 5-phospho-alpha-D-ribose 1-diphosphate: Arg87 and Arg113. Arg134 lines the GTP pocket. Residues Asp140 and 140–148 each bind 5-phospho-alpha-D-ribose 1-diphosphate; that span reads DPLLATGNS. Tyr204 contacts D-ribose 5-phosphate. Uracil contacts are provided by residues Val205 and 210-212; that span reads GDF. Asp211 contributes to the 5-phospho-alpha-D-ribose 1-diphosphate binding site.

This sequence belongs to the UPRTase family. Requires Mg(2+) as cofactor.

The enzyme catalyses UMP + diphosphate = 5-phospho-alpha-D-ribose 1-diphosphate + uracil. It functions in the pathway pyrimidine metabolism; UMP biosynthesis via salvage pathway; UMP from uracil: step 1/1. With respect to regulation, allosterically activated by GTP. Catalyzes the conversion of uracil and 5-phospho-alpha-D-ribose 1-diphosphate (PRPP) to UMP and diphosphate. This chain is Uracil phosphoribosyltransferase 2, found in Schizosaccharomyces pombe (strain 972 / ATCC 24843) (Fission yeast).